The following is a 353-amino-acid chain: GDSL esterase/lipase APG (353 aa).

The N-terminal stretch at 1–25 is a signal peptide; that stretch reads MDRCTSSFLLLTLVSTLSILQISFA. The active-site Nucleophile is Ser37. N-linked (GlcNAc...) asparagine glycosylation is found at Asn197 and Asn320. Active-site residues include Asp328 and His331.

The protein belongs to the 'GDSL' lipolytic enzyme family.

It localises to the secreted. This chain is GDSL esterase/lipase APG (APG), found in Arabidopsis thaliana (Mouse-ear cress).